A 132-amino-acid chain; its full sequence is Dormancy-associated protein 1 (132 aa).

Residues 53–76 are disordered; the sequence is MPAAVSPGTPTTPTTPTTPRKDNV. The segment covering 61 to 70 has biased composition (low complexity); it reads TPTTPTTPTT. Threonine 64 carries the phosphothreonine modification.

It belongs to the DRM1/ARP family. Isoform 1: Expressed mainly in the low bolt. Isoform 2: Expressed mainly in the low bolt. Detected in flowers. Isoform 4: Expressed mainly in the low bolt. Isoform 5: Expressed mainly in the 6 days old seedlings. Detected in 16 days old seedlings, axil, low bolt and floral samples, but only barely in leaves and top bolt.

In Arabidopsis thaliana (Mouse-ear cress), this protein is Dormancy-associated protein 1.